A 312-amino-acid polypeptide reads, in one-letter code: MTKIIFMGTPEFSVPVLTQLASTYDVVAVVTQPDRPVGRKRVLTPPPVKKAALELAIPVYQPEKLRTSSELEELIALEADLLVTAAYGQILPNSLLESPKHGAINVHASLLPEYRGGAPVHYALLDGKTETGVTIMYMVEKLDAGDMISQRKIPITDEDNTGTMFDKLSKLGAELLMDTLPDFLAGKITAIPQDPEKVTFARNISREQEKIDWTKPGRTIFNQIRGLSPWPVAYTTLEEKPFKIWEATYEETKESGEPGAILADKTTLKIVTGDGTLIVPTVIQPAGKPKMDIHSFMSGAGRNLSKTTRFGE.

Residue 109 to 112 (SLLP) coordinates (6S)-5,6,7,8-tetrahydrofolate.

It belongs to the Fmt family.

It carries out the reaction L-methionyl-tRNA(fMet) + (6R)-10-formyltetrahydrofolate = N-formyl-L-methionyl-tRNA(fMet) + (6S)-5,6,7,8-tetrahydrofolate + H(+). Functionally, attaches a formyl group to the free amino group of methionyl-tRNA(fMet). The formyl group appears to play a dual role in the initiator identity of N-formylmethionyl-tRNA by promoting its recognition by IF2 and preventing the misappropriation of this tRNA by the elongation apparatus. The chain is Methionyl-tRNA formyltransferase from Listeria monocytogenes serotype 4a (strain HCC23).